A 582-amino-acid polypeptide reads, in one-letter code: TBCC domain-containing protein 1 (582 aa).

The span at 140–153 (EWPSPRSRSPSSSS) shows a compositional bias: low complexity. Residues 140-159 (EWPSPRSRSPSSSSSERDAK) are disordered. Residues 305 to 451 (PPGSRLVLMS…LWNQPLLFGV (147 aa)) enclose the C-CAP/cofactor C-like domain. Over residues 547-558 (SLLPPTITPSSS) the composition is skewed to low complexity. Residues 547–582 (SLLPPTITPSSSAEHWSSNQNTLKEQTHEQPTGTVC) form a disordered region. The segment covering 559-582 (AEHWSSNQNTLKEQTHEQPTGTVC) has biased composition (polar residues).

The protein belongs to the TBCC family.

The protein resides in the cytoplasm. Its subcellular location is the cytoskeleton. It localises to the microtubule organizing center. It is found in the centrosome. The protein localises to the spindle pole. Its function is as follows. May play a role in the regulation of centrosome and Golgi apparatus positioning. The polypeptide is TBCC domain-containing protein 1 (tbccd1) (Danio rerio (Zebrafish)).